Reading from the N-terminus, the 236-residue chain is 7-cyano-7-deazaguanine synthase (236 aa).

7 to 17 lines the ATP pocket; it reads CSGGLDSVSLA. Zn(2+) contacts are provided by Cys185, Cys193, Cys196, and Cys199.

It belongs to the QueC family. Requires Zn(2+) as cofactor.

It carries out the reaction 7-carboxy-7-deazaguanine + NH4(+) + ATP = 7-cyano-7-deazaguanine + ADP + phosphate + H2O + H(+). It functions in the pathway purine metabolism; 7-cyano-7-deazaguanine biosynthesis. In terms of biological role, catalyzes the ATP-dependent conversion of 7-carboxy-7-deazaguanine (CDG) to 7-cyano-7-deazaguanine (preQ(0)). In Agrobacterium fabrum (strain C58 / ATCC 33970) (Agrobacterium tumefaciens (strain C58)), this protein is 7-cyano-7-deazaguanine synthase.